The following is a 139-amino-acid chain: Putative pre-16S rRNA nuclease (139 aa).

The protein belongs to the YqgF nuclease family.

It is found in the cytoplasm. Its function is as follows. Could be a nuclease involved in processing of the 5'-end of pre-16S rRNA. The polypeptide is Putative pre-16S rRNA nuclease (Streptococcus pneumoniae (strain JJA)).